Consider the following 138-residue polypeptide: Ribosome-binding factor A (138 aa).

A disordered region spans residues 112-138 (EARTQGQAPAADVEPAPGAAPDDEAEE). A compositionally biased stretch (low complexity) spans 119–131 (APAADVEPAPGAA).

The protein belongs to the RbfA family. Monomer. Binds 30S ribosomal subunits, but not 50S ribosomal subunits or 70S ribosomes.

It is found in the cytoplasm. Its function is as follows. One of several proteins that assist in the late maturation steps of the functional core of the 30S ribosomal subunit. Associates with free 30S ribosomal subunits (but not with 30S subunits that are part of 70S ribosomes or polysomes). Required for efficient processing of 16S rRNA. May interact with the 5'-terminal helix region of 16S rRNA. The protein is Ribosome-binding factor A of Anaeromyxobacter sp. (strain K).